The sequence spans 495 residues: Probable aspartic-type endopeptidase OPSB (495 aa).

Residues 1–19 form the signal peptide; it reads MRGDSFIWSLATAIPLLST. The 336-residue stretch at 73-408 folds into the Peptidase A1 domain; the sequence is YFCNLTLGTP…DLDNNEISIA (336 aa). A glycan (N-linked (GlcNAc...) asparagine) is linked at N76. Residue D91 is part of the active site. A glycan (N-linked (GlcNAc...) asparagine) is linked at N136. D290 is an active-site residue. N413 is a glycosylation site (N-linked (GlcNAc...) asparagine). Residues 447 to 470 form a disordered region; that stretch reads ATGLPGVETGVPGSRPPSSKAAGQ. A467 is lipidated: GPI-anchor amidated alanine. The propeptide at 468–495 is removed in mature form; the sequence is AGQAKRPDFVLGVAAVGLAGAGMLFAAM.

Belongs to the peptidase A1 family.

It is found in the cell membrane. Probable GPI-anchored aspartic-type endopeptidase which contributes to virulence. The protein is Probable aspartic-type endopeptidase OPSB (OPSB) of Arthroderma benhamiae (strain ATCC MYA-4681 / CBS 112371) (Trichophyton mentagrophytes).